We begin with the raw amino-acid sequence, 605 residues long: Endonuclease 8-like 3 (605 aa).

The active-site Schiff-base intermediate with DNA; via amino nitrogen is Val2. Residues Asn192 and Arg271 each coordinate DNA. The segment at 247–281 (KVYKRPNCGQCHCRITVCRFGDNNRMTYFCPHCQK) adopts an FPG-type zinc-finger fold. A RanBP2-type zinc finger spans residues 317–346 (SEEHWTCVVCTLINKPSSKACDACLTSRPI). Residue Ser450 is modified to Phosphoserine. The segment at 456-477 (ESKLFSPAHKKPKTAQYSSPEL) is disordered. Zn(2+) contacts are provided by Cys507, His510, Cys533, Cys541, Cys554, His556, Cys579, and Cys587. 2 GRF-type zinc fingers span residues 507 to 550 (CSKH…ADLS) and 554 to 596 (CNHG…AENG).

Belongs to the FPG family. As to expression, expressed in keratinocytes and embryonic fibroblasts (at protein level). Also detected in thymus, testis and fetal lung primary fibroblasts.

The protein resides in the nucleus. The protein localises to the chromosome. The enzyme catalyses 2'-deoxyribonucleotide-(2'-deoxyribose 5'-phosphate)-2'-deoxyribonucleotide-DNA = a 3'-end 2'-deoxyribonucleotide-(2,3-dehydro-2,3-deoxyribose 5'-phosphate)-DNA + a 5'-end 5'-phospho-2'-deoxyribonucleoside-DNA + H(+). Functionally, DNA glycosylase which prefers single-stranded DNA (ssDNA), or partially ssDNA structures such as bubble and fork structures, to double-stranded DNA (dsDNA). Mediates interstrand cross-link repair in response to replication stress: acts by mediating DNA glycosylase activity, cleaving one of the two N-glycosyl bonds comprising the interstrand cross-link, which avoids the formation of a double-strand break but generates an abasic site that is bypassed by translesion synthesis polymerases. In vitro, displays strong glycosylase activity towards the hydantoin lesions spiroiminodihydantoin (Sp) and guanidinohydantoin (Gh) in both ssDNA and dsDNA; also recognizes FapyA, FapyG, 5-OHU, 5-OHC, 5-OHMH, Tg and 8-oxoA lesions in ssDNA. No activity on 8-oxoG detected. Also shows weak DNA-(apurinic or apyrimidinic site) lyase activity. In vivo, appears to be the primary enzyme involved in removing Sp and Gh from ssDNA in neonatal tissues. In Homo sapiens (Human), this protein is Endonuclease 8-like 3 (NEIL3).